The following is a 454-amino-acid chain: MSAKISETLTFECETGNYHTFCPISCVSWLYQKIEDSFFLMVGTKTCGYFLQNTLGVMIFAEPRYAMAELEEGDISAQLNDYEELKRLCIRIKKDRDPNVIIWIGTCTTEIIKMDLEGMAPKLESEIGIPIIVARANGLDHAFTQGEDTVLAAMAHRCLEQRLFVRERNGTIQKFPPPLEKEGEFIEYGDHPSLALFGSLPSNVASQLSPELRRQSVKVSGWLPAQRYTHLPSLGNGVYVCGINPFLSRTAATLVRRERCRLIGAPFPIGPDGTRAWIEKICPVFDIETQGLEEREKQIWESLKDYISLVHGKSVFFMGDNLLEISLARFLIRCGMIVYEIGIPYMDKRYQAAELALLRDTCIKMCVPIPRIVEKPDNYNQLRRIRELQPDLAITGMAHADPLEARGMNTKWSVEFTFAQIHGFANARNVLELVTRPLRCNDNLEDLGRTTLVK.

Residues cysteine 22, cysteine 47, and cysteine 107 each coordinate [4Fe-4S] cluster.

The protein belongs to the BchN/ChlN family. Protochlorophyllide reductase is composed of three subunits; ChlL, ChlN and ChlB. Forms a heterotetramer of two ChlB and two ChlN subunits. [4Fe-4S] cluster serves as cofactor.

The protein localises to the plastid. It localises to the chloroplast. It catalyses the reaction chlorophyllide a + oxidized 2[4Fe-4S]-[ferredoxin] + 2 ADP + 2 phosphate = protochlorophyllide a + reduced 2[4Fe-4S]-[ferredoxin] + 2 ATP + 2 H2O. The protein operates within porphyrin-containing compound metabolism; chlorophyll biosynthesis (light-independent). Its function is as follows. Component of the dark-operative protochlorophyllide reductase (DPOR) that uses Mg-ATP and reduced ferredoxin to reduce ring D of protochlorophyllide (Pchlide) to form chlorophyllide a (Chlide). This reaction is light-independent. The NB-protein (ChlN-ChlB) is the catalytic component of the complex. This is Light-independent protochlorophyllide reductase subunit N from Cycas taitungensis (Prince sago).